The following is a 93-amino-acid chain: Phosphoribosyl-ATP pyrophosphatase (93 aa).

The protein belongs to the PRA-PH family.

It is found in the cytoplasm. The catalysed reaction is 1-(5-phospho-beta-D-ribosyl)-ATP + H2O = 1-(5-phospho-beta-D-ribosyl)-5'-AMP + diphosphate + H(+). It participates in amino-acid biosynthesis; L-histidine biosynthesis; L-histidine from 5-phospho-alpha-D-ribose 1-diphosphate: step 2/9. This Corynebacterium aurimucosum (strain ATCC 700975 / DSM 44827 / CIP 107346 / CN-1) (Corynebacterium nigricans) protein is Phosphoribosyl-ATP pyrophosphatase.